The sequence spans 664 residues: Intraflagellar transport protein 70A1 (664 aa).

TPR repeat units follow at residues 11 to 44, 45 to 78, 153 to 186, 188 to 220, 393 to 423, 424 to 456, and 458 to 491; these read DGEFTAVVYRLIRDSRYSEAVQLLSAELQRSSRS, RAGLSLLAYCYYRLQEFELAAECYEQLSQMHPEL, PDGLVNMGCLLYKEGHYEAACSKFLAALQASGYQ, DLSYNLALAYYSSRQYAPALKHIADIIERGIRQ, TKQVQEARHNRDDEIIKKAMNEYDETLEKYI, PVLMAQAKIYWNLENYPMVEKIFRKSVEFCNDH, and VWKLNVAHVLFMQENKYKEAIGFYEPIVKKNYDN. A coiled-coil region spans residues 507 to 534; that stretch reads YIMTSQNEEAEELMRKIEKEEEQLSYGD. The stretch at 543–576 is one TPR 8 repeat; it reads CIVNLVIGTLYCAKGNYDFGISRVIKSLEPYHKK.

The protein belongs to the TTC30/dfy-1/fleer family. In terms of assembly, interacts wit the IFT B complex component IFT52.

The protein localises to the cell projection. The protein resides in the cilium. Its function is as follows. Required for polyglutamylation of axonemal tubulin. Plays a role in anterograde intraflagellar transport (IFT), the process by which cilia precursors are transported from the base of the cilium to the site of their incorporation at the tip. This chain is Intraflagellar transport protein 70A1 (Ift70a1), found in Mus musculus (Mouse).